A 536-amino-acid chain; its full sequence is MFNRIRISTSLFLLLISFCIMQLISTGLSYVALRADNHNLERITVSSQQRDALSLSWVSLLQARNTLNRAGTRAALKVPQEQVDALMGGARSSLQKADLYFNQFLDTPRADEQEQQLADATRDSYENLRGALRELIVFLENRNLQAFMDQPTQKIQDRFEADFVQYLQLAKATTDEASASSQQAYGWSIWLVAGAVLMLLVVTLSAMWWLRTMLVQPLNIIRGHFERIASGDLSAPIEVYGRNEISQLFASLQRMQQSLIGTVGAVRDGAESILIGLQEIAEGNNDLSSRTEQQAASLEETAASMEQLTATVKQNADNARQASQLARDASSTAAKGGELADDVVTTMHDIANSSQKIGAITSVIDGIAFQTNILALNAAVEAARAGEQGRGFAVVAGEVRNLASRSAQAAKEIKLLIDESVSRVKHGSVLVENSGATMQDIVRSVTRVTDIMGEIASASDEQSRGIEQVTQAVTQMDQVTQQNAALVVESASAAAALEEQAITLADAVAVFRLADDNFVAPETSSTVKETLDCQTA.

At 1–10 the chain is on the cytoplasmic side; that stretch reads MFNRIRISTS. Residues 11-31 form a helical membrane-spanning segment; it reads LFLLLISFCIMQLISTGLSYV. Residues 32–188 lie on the Periplasmic side of the membrane; it reads ALRADNHNLE…ASSQQAYGWS (157 aa). Residues 64-73 form a the 3 Arg may form a positively charged pocket, which binds the alpha-carboxyl group of the attractant AA region; it reads RNTLNRAGTR. Residues 189–209 traverse the membrane as a helical segment; sequence IWLVAGAVLMLLVVTLSAMWW. The Cytoplasmic portion of the chain corresponds to 210 to 536; that stretch reads LRTMLVQPLN…VKETLDCQTA (327 aa). In terms of domain architecture, HAMP spans 212–264; the sequence is TMLVQPLNIIRGHFERIASGDLSAPIEVYGRNEISQLFASLQRMQQSLIGTVG. The region spanning 269 to 498 is the Methyl-accepting transducer domain; sequence GAESILIGLQ…ESASAAAALE (230 aa). The residue at position 293 (Gln-293) is a Glutamate methyl ester (Gln). Glu-300 is modified (glutamate methyl ester (Glu)). Gln-307 is modified (glutamate methyl ester (Gln)). Residues Glu-489 and Glu-498 each carry the glutamate methyl ester (Glu) modification.

Belongs to the methyl-accepting chemotaxis (MCP) protein family.

It localises to the cell inner membrane. This protein responds to changes in Asp concentration in the environment, transduces a signal from the outside to the inside of the cell, and facilitates sensory adaptation through various levels of methylation. Functionally, chemotactic-signal transducers respond to changes in the concentration of attractants and repellents in the environment, transduce a signal from the outside to the inside of the cell, and facilitate sensory adaptation through the variation of the level of methylation. Attractants increase the level of methylation while repellents decrease the level of methylation, the methyl groups are added by the methyltransferase CheR and removed by the methylesterase CheB. The polypeptide is Methyl-accepting chemotaxis aspartate transducer (tas) (Klebsiella aerogenes (strain ATCC 13048 / DSM 30053 / CCUG 1429 / JCM 1235 / KCTC 2190 / NBRC 13534 / NCIMB 10102 / NCTC 10006 / CDC 819-56) (Enterobacter aerogenes)).